Here is a 384-residue protein sequence, read N- to C-terminus: 1-deoxy-D-xylulose 5-phosphate reductoisomerase (384 aa).

Thr10, Gly11, Ser12, Ile13, Arg37, Asn38, and Asn124 together coordinate NADPH. Lys125 contributes to the 1-deoxy-D-xylulose 5-phosphate binding site. Glu126 contributes to the NADPH binding site. A Mn(2+)-binding site is contributed by Asp150. 1-deoxy-D-xylulose 5-phosphate is bound by residues Ser151, Glu152, Ser176, and His199. Position 152 (Glu152) interacts with Mn(2+). Gly205 serves as a coordination point for NADPH. Residues Ser212, Asn217, Lys218, and Glu221 each contribute to the 1-deoxy-D-xylulose 5-phosphate site. Position 221 (Glu221) interacts with Mn(2+).

The protein belongs to the DXR family. Requires Mg(2+) as cofactor. Mn(2+) serves as cofactor.

The catalysed reaction is 2-C-methyl-D-erythritol 4-phosphate + NADP(+) = 1-deoxy-D-xylulose 5-phosphate + NADPH + H(+). Its pathway is isoprenoid biosynthesis; isopentenyl diphosphate biosynthesis via DXP pathway; isopentenyl diphosphate from 1-deoxy-D-xylulose 5-phosphate: step 1/6. Its function is as follows. Catalyzes the NADPH-dependent rearrangement and reduction of 1-deoxy-D-xylulose-5-phosphate (DXP) to 2-C-methyl-D-erythritol 4-phosphate (MEP). This Clostridium perfringens (strain 13 / Type A) protein is 1-deoxy-D-xylulose 5-phosphate reductoisomerase.